Here is a 204-residue protein sequence, read N- to C-terminus: Small ribosomal subunit protein uS4 (204 aa).

The 65-residue stretch at 92 to 156 (RRLDALVLRS…SKVPFQVARE (65 aa)) folds into the S4 RNA-binding domain.

The protein belongs to the universal ribosomal protein uS4 family. Part of the 30S ribosomal subunit. Contacts protein S5. The interaction surface between S4 and S5 is involved in control of translational fidelity.

In terms of biological role, one of the primary rRNA binding proteins, it binds directly to 16S rRNA where it nucleates assembly of the body of the 30S subunit. With S5 and S12 plays an important role in translational accuracy. In Streptomyces griseus subsp. griseus (strain JCM 4626 / CBS 651.72 / NBRC 13350 / KCC S-0626 / ISP 5235), this protein is Small ribosomal subunit protein uS4.